The following is a 144-amino-acid chain: Putative pre-16S rRNA nuclease (144 aa).

It belongs to the YqgF nuclease family.

It is found in the cytoplasm. In terms of biological role, could be a nuclease involved in processing of the 5'-end of pre-16S rRNA. This is Putative pre-16S rRNA nuclease from Chlorobium phaeobacteroides (strain BS1).